The following is a 350-amino-acid chain: tRNA uridine(34) hydroxylase (350 aa).

One can recognise a Rhodanese domain in the interval 146 to 240 (DDPDAVFIDM…YARRAREQGL (95 aa)). Catalysis depends on Cys200, which acts as the Cysteine persulfide intermediate. The segment covering 319-328 (RRRRAGRENG) has biased composition (basic and acidic residues). The disordered stretch occupies residues 319–350 (RRRRAGRENGNKIFNKSRGRLNSKLSIPDPAE).

Belongs to the TrhO family.

It catalyses the reaction uridine(34) in tRNA + AH2 + O2 = 5-hydroxyuridine(34) in tRNA + A + H2O. In terms of biological role, catalyzes oxygen-dependent 5-hydroxyuridine (ho5U) modification at position 34 in tRNAs. This chain is tRNA uridine(34) hydroxylase, found in Salmonella schwarzengrund (strain CVM19633).